The sequence spans 82 residues: Large ribosomal subunit protein uL23 (82 aa).

It belongs to the universal ribosomal protein uL23 family. In terms of assembly, part of the 50S ribosomal subunit. Contacts protein L29.

Binds to 23S rRNA. One of the proteins that surrounds the polypeptide exit tunnel on the outside of the ribosome. The sequence is that of Large ribosomal subunit protein uL23 from Methanosarcina mazei (strain ATCC BAA-159 / DSM 3647 / Goe1 / Go1 / JCM 11833 / OCM 88) (Methanosarcina frisia).